A 116-amino-acid chain; its full sequence is Large ribosomal subunit protein uL18 (116 aa).

It belongs to the universal ribosomal protein uL18 family. In terms of assembly, part of the 50S ribosomal subunit; part of the 5S rRNA/L5/L18/L25 subcomplex. Contacts the 5S and 23S rRNAs.

Its function is as follows. This is one of the proteins that bind and probably mediate the attachment of the 5S RNA into the large ribosomal subunit, where it forms part of the central protuberance. The chain is Large ribosomal subunit protein uL18 from Shewanella putrefaciens (strain CN-32 / ATCC BAA-453).